Reading from the N-terminus, the 50-residue chain is Large ribosomal subunit protein bL33 (50 aa).

It belongs to the bacterial ribosomal protein bL33 family.

This Hydrogenovibrio crunogenus (strain DSM 25203 / XCL-2) (Thiomicrospira crunogena) protein is Large ribosomal subunit protein bL33.